Here is a 175-residue protein sequence, read N- to C-terminus: MITVLRLDHRLGRDTRITTHVCLTARAFGADKVILSGEHDKHIIESAQKVVENWGGDFEVEYQKAYRPVIKEHKQKGFEIIHLTMYGKHVEDVVPTIRDNNRDKLIIVGGSRVPTDVYEAADWNLSVTNQPHSEVAALAICLHYMMDGSELKTVYDDGKMQIVPNNEHKEVIKNE.

Leu83 serves as a coordination point for S-adenosyl-L-methionine.

It belongs to the aTrm56 family. Homodimer.

It is found in the cytoplasm. The catalysed reaction is cytidine(56) in tRNA + S-adenosyl-L-methionine = 2'-O-methylcytidine(56) in tRNA + S-adenosyl-L-homocysteine + H(+). Specifically catalyzes the AdoMet-dependent 2'-O-ribose methylation of cytidine at position 56 in tRNAs. The polypeptide is tRNA (cytidine(56)-2'-O)-methyltransferase (Methanosphaera stadtmanae (strain ATCC 43021 / DSM 3091 / JCM 11832 / MCB-3)).